Here is a 492-residue protein sequence, read N- to C-terminus: Stromelysin-3 (492 aa).

A signal peptide spans 1 to 35 (MARAACLLRAISRVLLLPLPLLLLLLLLLPSPLMA). Positions 36–101 (RARPPESHRH…VLNARNRQKR (66 aa)) are cleaved as a propeptide — activation peptide. The Cysteine switch signature appears at 82–89 (LRCGVPDL). Zn(2+) is bound by residues Cys-84, His-168, and Asp-170. Asp-175, Gly-176, Gly-178, and Ile-180 together coordinate Ca(2+). Zn(2+) contacts are provided by His-183, His-196, and His-219. Residue Glu-220 is part of the active site. Residues His-223 and His-229 each contribute to the Zn(2+) site. Hemopexin repeat units follow at residues 295–343 (PDVC…WQGL), 344–386 (PSPV…KLGL), 388–436 (GSPV…WRGV), and 437–484 (PSEI…FFDC). Cysteines 298 and 484 form a disulfide.

Belongs to the peptidase M10A family. It depends on Ca(2+) as a cofactor. Zn(2+) is required as a cofactor. In terms of processing, the precursor is cleaved by a furin endopeptidase. As to expression, specifically expressed in the mammary gland during apoptosis.

It is found in the secreted. The protein resides in the extracellular space. It localises to the extracellular matrix. Functionally, may play an important role in the progression of epithelial malignancies. The protein is Stromelysin-3 (Mmp11) of Mus musculus (Mouse).